A 129-amino-acid polypeptide reads, in one-letter code: Protein LLP homolog (129 aa).

Residues 1 to 21 are compositionally biased toward basic residues; sequence MAKSLRSKWKRKMRAEKRKKN. The disordered stretch occupies residues 1–27; sequence MAKSLRSKWKRKMRAEKRKKNAPKEAS. Glycyl lysine isopeptide (Lys-Gly) (interchain with G-Cter in SUMO2) cross-links involve residues K67 and K74. The segment covering 100–122 has biased composition (basic residues); it reads RQRKRLKAKREKRKGKSKAKAVK. A disordered region spans residues 100-129; the sequence is RQRKRLKAKREKRKGKSKAKAVKVAKGLAW.

The protein belongs to the learning-associated protein family. As to quaternary structure, interacts with CTCF, MYO1C and with the transcriptional machinery, including RNA polymerase II and TBP.

The protein resides in the nucleus. Its subcellular location is the nucleolus. The protein localises to the chromosome. In hippocampal neurons, regulates dendritic and spine growth and synaptic transmission. The polypeptide is Protein LLP homolog (LLPH) (Homo sapiens (Human)).